The following is a 67-amino-acid chain: Conotoxin AbVIN (67 aa).

The first 17 residues, 1–17 (VIIIAVLFLTACQLIAT), serve as a signal peptide directing secretion. Residues 18–40 (ASYARSERKHPDLRLSSRNSKLS) constitute a propeptide that is removed on maturation. Cystine bridges form between cysteine 43–cysteine 57, cysteine 50–cysteine 61, and cysteine 56–cysteine 66.

This sequence belongs to the conotoxin O1 superfamily. In terms of tissue distribution, expressed by the venom duct.

The protein resides in the secreted. In Conus abbreviatus (Abbreviated cone), this protein is Conotoxin AbVIN.